Consider the following 257-residue polypeptide: Insulin-induced gene 1 protein (257 aa).

The Cytoplasmic portion of the chain corresponds to 1–64 (MPRLHDHVWS…ARPGSWHHDL (64 aa)). The interval 32–54 (CPQGSGAPEPAPRSPRAGTAGCG) is disordered. The chain crosses the membrane as a helical span at residues 65-87 (VQRSLVLFSFGVVLALVLNLLQI). The Extracellular portion of the chain corresponds to 88 to 106 (QRNVTLFPDEVIATIFSSA). Residues 107–124 (WWVPPCCGTAAAVVGLLY) form a helical membrane-spanning segment. Topologically, residues 125 to 139 (PCIDSHLGEPHKFKR) are cytoplasmic. Residues Lys-136 and Lys-138 each participate in a glycyl lysine isopeptide (Lys-Gly) (interchain with G-Cter in ubiquitin) cross-link. The helical transmembrane segment at 140–162 (EWASVMRCIAVFVGINHASAKLD) threads the bilayer. The Extracellular portion of the chain corresponds to 163-165 (FAN). A helical membrane pass occupies residues 166-184 (NVQLSLTLAALSLGLWWTF). Topologically, residues 185 to 189 (DRSRS) are cytoplasmic. Ser-187 carries the phosphoserine modification. The helical transmembrane segment at 190 to 211 (GLGLGITIAFLATLITQFLVYN) threads the bilayer. The Extracellular segment spans residues 212-225 (GVYQYTSPDFLYIR). The helical transmembrane segment at 226 to 243 (SWLPCIFFSGGVTVGNIG) threads the bilayer. The Cytoplasmic portion of the chain corresponds to 244 to 257 (RQLAMGVPEKPHSD). The KxHxx motif lies at 251–257 (PEKPHSD).

The protein belongs to the INSIG family. As to quaternary structure, interacts with SCAP; interaction is direct and only takes place in the presence of sterols; it prevents interaction between SCAP and the coat protein complex II (COPII). Associates with the SCAP-SREBP complex (composed of SCAP and SREBF1/SREBP1 or SREBF2/SREBP2); association is mediated via its interaction with SCAP and only takes place in the presence of sterols. Interaction with SCAP is mutually exclusive with PAQR3. Interacts with HMGCR (via its SSD); the interaction, accelerated by sterols, leads to the recruitment of HMGCR to AMFR/gp78 for its ubiquitination by the sterol-mediated ERAD pathway. Interacts with AMFR/gp78 (via its membrane domain); the interaction recruits HMCR at the ER membrane for its ubiquitination and degradation by the sterol-mediated ERAD pathway. Interacts with SOAT2/ACAT2; leading to promote recruitment of AMFR/gp78 and subsequent ubiquitination of SOAT2/ACAT2. Interacts with RNF139. Interacts with RNF145. Post-translationally, phosphorylation at Ser-187 by PCK1 reduces binding to oxysterol, disrupting the interaction between INSIG1 and SCAP, thereby promoting nuclear translocation of SREBP proteins (SREBF1/SREBP1 or SREBF2/SREBP2) and subsequent transcription of downstream lipogenesis-related genes. In terms of processing, ubiquitinated by AMFR/gp78 in response to sterol deprivation, leading to its degradation: when the SCAP-SREBP complex becomes dissociated from INSIG1, INSIG1 is then ubiquitinated and degraded in proteasomes. Although ubiquitination is required for rapid INSIG1 degradation, it is not required for release of the SCAP-SREBP complex. Ubiquitinated by RNF139.

It localises to the endoplasmic reticulum membrane. Functionally, oxysterol-binding protein that mediates feedback control of cholesterol synthesis by controlling both endoplasmic reticulum to Golgi transport of SCAP and degradation of HMGCR. Acts as a negative regulator of cholesterol biosynthesis by mediating the retention of the SCAP-SREBP complex in the endoplasmic reticulum, thereby blocking the processing of sterol regulatory element-binding proteins (SREBPs) SREBF1/SREBP1 and SREBF2/SREBP2. Binds oxysterol, including 25-hydroxycholesterol, regulating interaction with SCAP and retention of the SCAP-SREBP complex in the endoplasmic reticulum. In presence of oxysterol, interacts with SCAP, retaining the SCAP-SREBP complex in the endoplasmic reticulum, thereby preventing SCAP from escorting SREBF1/SREBP1 and SREBF2/SREBP2 to the Golgi. Sterol deprivation or phosphorylation by PCK1 reduce oxysterol-binding, disrupting the interaction between INSIG1 and SCAP, thereby promoting Golgi transport of the SCAP-SREBP complex, followed by processing and nuclear translocation of SREBF1/SREBP1 and SREBF2/SREBP2. Also regulates cholesterol synthesis by regulating degradation of HMGCR: initiates the sterol-mediated ubiquitin-mediated endoplasmic reticulum-associated degradation (ERAD) of HMGCR via recruitment of the reductase to the ubiquitin ligases AMFR/gp78 and/or RNF139. Also regulates degradation of SOAT2/ACAT2 when the lipid levels are low: initiates the ubiquitin-mediated degradation of SOAT2/ACAT2 via recruitment of the ubiquitin ligases AMFR/gp78. The polypeptide is Insulin-induced gene 1 protein (Cricetulus griseus (Chinese hamster)).